We begin with the raw amino-acid sequence, 212 residues long: Penicillin-binding protein activator LpoB (212 aa).

A signal peptide spans 1-19 (MTKMHRYAAIAALAIFLSG). Cys-20 carries the N-palmitoyl cysteine lipid modification. Residue Cys-20 is the site of S-diacylglycerol cysteine attachment. The segment at 28–73 (PVEEVKPAPEQPAQPPQPPVVPSVPTIPQQPGPIEHEDQTGQPAPK) is disordered. A compositionally biased stretch (pro residues) spans 36–49 (PEQPAQPPQPPVVP).

It belongs to the LpoB family. Interacts with PBP1b.

Its subcellular location is the cell outer membrane. Functionally, regulator of peptidoglycan synthesis that is essential for the function of penicillin-binding protein 1B (PBP1b). The chain is Penicillin-binding protein activator LpoB from Salmonella typhimurium (strain LT2 / SGSC1412 / ATCC 700720).